We begin with the raw amino-acid sequence, 305 residues long: Tyrosine recombinase XerC (305 aa).

One can recognise a Core-binding (CB) domain in the interval 4–95 (TQIQELIIKW…AIKNFYKFLE (92 aa)). One can recognise a Tyr recombinase domain in the interval 116-298 (LLPKALSEEE…SIKHLETAYV (183 aa)). Residues Arg159, Lys182, His250, Arg253, and His276 contribute to the active site. Tyr285 (O-(3'-phospho-DNA)-tyrosine intermediate) is an active-site residue.

The protein belongs to the 'phage' integrase family. XerC subfamily. Forms a cyclic heterotetrameric complex composed of two molecules of XerC and two molecules of XerD.

Its subcellular location is the cytoplasm. Site-specific tyrosine recombinase, which acts by catalyzing the cutting and rejoining of the recombining DNA molecules. The XerC-XerD complex is essential to convert dimers of the bacterial chromosome into monomers to permit their segregation at cell division. It also contributes to the segregational stability of plasmids. The protein is Tyrosine recombinase XerC of Rickettsia bellii (strain OSU 85-389).